The primary structure comprises 443 residues: Histidinol dehydrogenase (443 aa).

Positions 127, 185, and 208 each coordinate NAD(+). Substrate-binding residues include Ser234, Gln256, and His259. Positions 256 and 259 each coordinate Zn(2+). Catalysis depends on proton acceptor residues Glu323 and His324. Residues His324, Asp357, Glu411, and His416 each contribute to the substrate site. Asp357 serves as a coordination point for Zn(2+). Zn(2+) is bound at residue His416.

Belongs to the histidinol dehydrogenase family. Requires Zn(2+) as cofactor.

It catalyses the reaction L-histidinol + 2 NAD(+) + H2O = L-histidine + 2 NADH + 3 H(+). It functions in the pathway amino-acid biosynthesis; L-histidine biosynthesis; L-histidine from 5-phospho-alpha-D-ribose 1-diphosphate: step 9/9. Functionally, catalyzes the sequential NAD-dependent oxidations of L-histidinol to L-histidinaldehyde and then to L-histidine. In Photobacterium profundum (strain SS9), this protein is Histidinol dehydrogenase.